A 180-amino-acid chain; its full sequence is Acireductone dioxygenase (180 aa).

Fe(2+) is bound by residues His97, His99, Glu103, and His141. Residues His97, His99, Glu103, and His141 each contribute to the Ni(2+) site.

Belongs to the acireductone dioxygenase (ARD) family. As to quaternary structure, monomer. Fe(2+) is required as a cofactor. Ni(2+) serves as cofactor.

The catalysed reaction is 1,2-dihydroxy-5-(methylsulfanyl)pent-1-en-3-one + O2 = 3-(methylsulfanyl)propanoate + CO + formate + 2 H(+). It catalyses the reaction 1,2-dihydroxy-5-(methylsulfanyl)pent-1-en-3-one + O2 = 4-methylsulfanyl-2-oxobutanoate + formate + 2 H(+). The protein operates within amino-acid biosynthesis; L-methionine biosynthesis via salvage pathway; L-methionine from S-methyl-5-thio-alpha-D-ribose 1-phosphate: step 5/6. Catalyzes 2 different reactions between oxygen and the acireductone 1,2-dihydroxy-3-keto-5-methylthiopentene (DHK-MTPene) depending upon the metal bound in the active site. Fe-containing acireductone dioxygenase (Fe-ARD) produces formate and 2-keto-4-methylthiobutyrate (KMTB), the alpha-ketoacid precursor of methionine in the methionine recycle pathway. Ni-containing acireductone dioxygenase (Ni-ARD) produces methylthiopropionate, carbon monoxide and formate, and does not lie on the methionine recycle pathway. The sequence is that of Acireductone dioxygenase from Citrobacter koseri (strain ATCC BAA-895 / CDC 4225-83 / SGSC4696).